Here is a 300-residue protein sequence, read N- to C-terminus: Ribosomal protein L11 methyltransferase (300 aa).

Thr152, Gly173, Asp195, and Asn234 together coordinate S-adenosyl-L-methionine.

Belongs to the methyltransferase superfamily. PrmA family.

It is found in the cytoplasm. The catalysed reaction is L-lysyl-[protein] + 3 S-adenosyl-L-methionine = N(6),N(6),N(6)-trimethyl-L-lysyl-[protein] + 3 S-adenosyl-L-homocysteine + 3 H(+). Methylates ribosomal protein L11. The chain is Ribosomal protein L11 methyltransferase from Burkholderia thailandensis (strain ATCC 700388 / DSM 13276 / CCUG 48851 / CIP 106301 / E264).